The chain runs to 354 residues: Uroporphyrinogen decarboxylase (354 aa).

Substrate is bound by residues 27 to 31, Asp-77, Tyr-154, Ser-209, and His-327; that span reads RQAGR.

It belongs to the uroporphyrinogen decarboxylase family. As to quaternary structure, homodimer.

It is found in the cytoplasm. The catalysed reaction is uroporphyrinogen III + 4 H(+) = coproporphyrinogen III + 4 CO2. The protein operates within porphyrin-containing compound metabolism; protoporphyrin-IX biosynthesis; coproporphyrinogen-III from 5-aminolevulinate: step 4/4. Catalyzes the decarboxylation of four acetate groups of uroporphyrinogen-III to yield coproporphyrinogen-III. The polypeptide is Uroporphyrinogen decarboxylase (Saccharophagus degradans (strain 2-40 / ATCC 43961 / DSM 17024)).